A 243-amino-acid polypeptide reads, in one-letter code: MRSIRMRAEFQGEHVSGAERIVPYHEVEKTVLELLKRPRVYDKVVITVERLKDVEIVPKALPILSYDFKSVEEARAFAVSKLVEAGVPKPVAELAIKLLHEGPNPKGGNMRGAVLMDVETGERLEPDRERGIRTTRMDWKDRKYIKEVLKKRGIKREYLERLIDALAVATKNVYCGVLAELCWSDDPEYTTGYVAGPHIGYVRIKPMKEEGVPIGGRVYFIRKENLEKIIQCLQEKPILINNL.

Belongs to the BioW family. Homodimer. It depends on Mg(2+) as a cofactor.

The enzyme catalyses heptanedioate + ATP + CoA = 6-carboxyhexanoyl-CoA + AMP + diphosphate. It functions in the pathway metabolic intermediate metabolism; pimeloyl-CoA biosynthesis; pimeloyl-CoA from pimelate: step 1/1. Its function is as follows. Catalyzes the transformation of pimelate into pimeloyl-CoA with concomitant hydrolysis of ATP to AMP. The chain is 6-carboxyhexanoate--CoA ligase from Thermocrinis albus (strain DSM 14484 / JCM 11386 / HI 11/12).